A 335-amino-acid chain; its full sequence is MRIAVDAMGGDHAPKSTVLGALAAIKENPAITVVLVGDEQAIRNHLPQDIPANIEIVPAAEVILPDDEPVRAVRRKKNSSLVVAVEMAREKKVDAMISAGNTGALMTAGLLYAGRMDGIERPALCAYIPNSKGRVTLTLDVGANMDAKPHQLVQYAVMGSLYAEKVLGFERPTVGLLNVGTEEGKGNELTKAVFPLLQEADLNFVGNVEARDVMQGACDVLVCDGFVGNVLLKAVEGAASTIFSQLKQEFTSSLINKLGAAILKPGLVRFKKKMDYAEYGGAPLLGLKSPVIKAHGSSNERAMKNAIVSATRFVQQDVNEVIQQSLQKNTLGESE.

The protein belongs to the PlsX family. As to quaternary structure, homodimer. Probably interacts with PlsY.

The protein resides in the cytoplasm. It carries out the reaction a fatty acyl-[ACP] + phosphate = an acyl phosphate + holo-[ACP]. The protein operates within lipid metabolism; phospholipid metabolism. In terms of biological role, catalyzes the reversible formation of acyl-phosphate (acyl-PO(4)) from acyl-[acyl-carrier-protein] (acyl-ACP). This enzyme utilizes acyl-ACP as fatty acyl donor, but not acyl-CoA. The polypeptide is Phosphate acyltransferase (Brevibacillus brevis (strain 47 / JCM 6285 / NBRC 100599)).